A 597-amino-acid polypeptide reads, in one-letter code: uncharacterized protein (597 aa).

Residues 48–198 (LHPYNPYSSL…DSILSLTKET (151 aa)) enclose the Helicase ATP-binding domain. 61-68 (YDVGLGKT) lines the ATP pocket. Residues 146–149 (DEVH) carry the DEVH box motif. The Helicase C-terminal domain maps to 275–467 (KINAFINSIK…DIPKIDNEMV (193 aa)).

Belongs to the helicase family.

Functionally, the presence of the two linear plasmids, termed pGKL1 and pGKL2, in strains of Kluyveromyces lactis confers the killer phenotype to the host cell, by promoting the secretion of a toxin able to inhibit the growth of sensitive strains. This is an uncharacterized protein from Kluyveromyces lactis (strain ATCC 8585 / CBS 2359 / DSM 70799 / NBRC 1267 / NRRL Y-1140 / WM37) (Yeast).